Consider the following 436-residue polypeptide: Phosphomethylpyrimidine synthase (436 aa).

Substrate is bound by residues Asn69, Met98, Tyr127, His163, 185 to 187, 226 to 229, and Glu265; these read SRG and DACR. His269 is a binding site for Zn(2+). Residue Tyr292 coordinates substrate. His333 contacts Zn(2+). 3 residues coordinate [4Fe-4S] cluster: Cys409, Cys412, and Cys416.

It belongs to the ThiC family. [4Fe-4S] cluster is required as a cofactor.

The catalysed reaction is 5-amino-1-(5-phospho-beta-D-ribosyl)imidazole + S-adenosyl-L-methionine = 4-amino-2-methyl-5-(phosphooxymethyl)pyrimidine + CO + 5'-deoxyadenosine + formate + L-methionine + 3 H(+). It functions in the pathway cofactor biosynthesis; thiamine diphosphate biosynthesis. Its function is as follows. Catalyzes the synthesis of the hydroxymethylpyrimidine phosphate (HMP-P) moiety of thiamine from aminoimidazole ribotide (AIR) in a radical S-adenosyl-L-methionine (SAM)-dependent reaction. The protein is Phosphomethylpyrimidine synthase of Clostridium perfringens (strain SM101 / Type A).